A 417-amino-acid polypeptide reads, in one-letter code: Histidinol-phosphate aminotransferase 1, chloroplastic (417 aa).

The N-terminal 40 residues, 1–40 (MGVINVQGSPSFSIHSSESNLRKSRALKKPFCSIRNRVYC), are a transit peptide targeting the chloroplast. A41 is modified (N-acetylalanine). K277 is subject to N6-(pyridoxal phosphate)lysine.

The protein belongs to the class-II pyridoxal-phosphate-dependent aminotransferase family. Histidinol-phosphate aminotransferase subfamily. As to quaternary structure, homodimer. Requires pyridoxal 5'-phosphate as cofactor. As to expression, expressed in both vegetative and reproductive tissues.

The protein localises to the plastid. The protein resides in the chloroplast. The catalysed reaction is L-histidinol phosphate + 2-oxoglutarate = 3-(imidazol-4-yl)-2-oxopropyl phosphate + L-glutamate. Its pathway is amino-acid biosynthesis; L-histidine biosynthesis; L-histidine from 5-phospho-alpha-D-ribose 1-diphosphate: step 7/9. This Arabidopsis thaliana (Mouse-ear cress) protein is Histidinol-phosphate aminotransferase 1, chloroplastic (HISN6A).